The following is a 375-amino-acid chain: Alcohol dehydrogenase 1 (375 aa).

Ser2 bears the N-acetylserine mark. Zn(2+)-binding residues include Cys47, His68, Cys98, Cys101, Cys104, Cys112, and Cys175. NAD(+) contacts are provided by residues 200 to 205 (GLGGVG), Asp224, and Lys229. Lys234 carries the post-translational modification N6-succinyllysine. An NAD(+)-binding site is contributed by 293–295 (VGV). Residue Lys340 is modified to N6-succinyllysine. An NAD(+)-binding site is contributed by Arg370.

Belongs to the zinc-containing alcohol dehydrogenase family. Class-I subfamily. Zn(2+) serves as cofactor.

Its subcellular location is the cytoplasm. The catalysed reaction is a primary alcohol + NAD(+) = an aldehyde + NADH + H(+). It catalyses the reaction a secondary alcohol + NAD(+) = a ketone + NADH + H(+). The sequence is that of Alcohol dehydrogenase 1 (ADH1) from Peromyscus maniculatus (North American deer mouse).